A 374-amino-acid polypeptide reads, in one-letter code: Arf-GAP with dual PH domain-containing protein 1 (374 aa).

The region spanning 7–126 is the Arf-GAP domain; the sequence is RAVLELLQRP…EFIYPEKQEP (120 aa). The C4-type zinc-finger motif lies at 21–44; it reads CADCGAPDPDWASYTLGVFICLSC. Residue Ser-87 is modified to Phosphoserine; by PKC. PH domains are found at residues 129-230 and 252-356; these read AGYR…AARF and NYLK…KAVD. Lys-272 is subject to N6-acetyllysine. At Thr-276 the chain carries Phosphothreonine; by PKC.

Interacts with PRKCA, PRKCI and PRKCZ. Interacts with the N-terminal region of PRKD1. In terms of processing, phosphorylated by PRKCA, PRKCI, PRKCZ and PRKD1 in vitro. As to expression, expressed at highest levels in brain and at lower levels in peripheral blood leukocytes.

It localises to the nucleus. Its subcellular location is the cytoplasm. Functionally, GTPase-activating protein for the ADP ribosylation factor family. Binds phosphatidylinositol 3,4,5-trisphosphate (PtdInsP3) and inositol 1,3,4,5-tetrakisphosphate (InsP4). Regulates the incorporation of CD63 and CD9 into multivesicular bodies. This chain is Arf-GAP with dual PH domain-containing protein 1 (ADAP1), found in Homo sapiens (Human).